We begin with the raw amino-acid sequence, 500 residues long: Probable malate:quinone oxidoreductase (500 aa).

The protein belongs to the MQO family. It depends on FAD as a cofactor.

The enzyme catalyses (S)-malate + a quinone = a quinol + oxaloacetate. It participates in carbohydrate metabolism; tricarboxylic acid cycle; oxaloacetate from (S)-malate (quinone route): step 1/1. In Prochlorococcus marinus (strain MIT 9211), this protein is Probable malate:quinone oxidoreductase.